A 443-amino-acid chain; its full sequence is Amino-acid acetyltransferase (443 aa).

Residues 296–443 (EQIRRATIND…KSKVLMADLG (148 aa)) form the N-acetyltransferase domain.

Belongs to the acetyltransferase family. ArgA subfamily. As to quaternary structure, homohexamer.

It localises to the cytoplasm. The catalysed reaction is L-glutamate + acetyl-CoA = N-acetyl-L-glutamate + CoA + H(+). The protein operates within amino-acid biosynthesis; L-arginine biosynthesis; N(2)-acetyl-L-ornithine from L-glutamate: step 1/4. This chain is Amino-acid acetyltransferase (argA), found in Escherichia coli O157:H7.